Here is a 232-residue protein sequence, read N- to C-terminus: MKERRAPQPVVVRCKLVLVGDVQCGKTAMLQVLAKDCYPETYVPTVFENYTACLETEEQRVELSLWDTSGSPYYDNVRPLCYSDSDAVLLCFDISRPETMDSALKKWRTEILDYCPSTRVLLIGCKTDLRTDLSTLMELSHQKQAPISYEQGCAIAKQLGAEIYLEGSAFTSETSIHSIFRTASMVCLNKSSPVPPKSPVRSLSKRLLHLPSRSELISTTFKKEKAKSCSIM.

Residues 23–28, 38–45, 67–71, 125–128, and 169–170 contribute to the GTP site; these read QCGKTA, YPETYVPT, DTSGS, CKTD, and AF. An Effector region motif is present at residues 42 to 50; the sequence is YVPTVFENY. A Cysteine methyl ester modification is found at cysteine 229. Residue cysteine 229 is the site of S-geranylgeranyl cysteine attachment. The propeptide at 230 to 232 is removed in mature form; it reads SIM.

It belongs to the small GTPase superfamily. Rho family. Binds GRB7 and PLXNB1. Interacts with PLXNA2. Interacts with UBXD5.

The protein localises to the cell membrane. Its subcellular location is the cytoplasm. It is found in the cytoskeleton. Lacks intrinsic GTPase activity. Has a low affinity for GDP, and constitutively binds GTP. Controls rearrangements of the actin cytoskeleton. Induces the Rac-dependent neuritic process formation in part by disruption of the cortical actin filaments. Causes the formation of many neuritic processes from the cell body with disruption of the cortical actin filaments. In Mus musculus (Mouse), this protein is Rho-related GTP-binding protein Rho6 (Rnd1).